The chain runs to 1250 residues: Protein suppressor of variegation 3-7 (1250 aa).

Disordered regions lie at residues 107–148 (LNNP…HSYH) and 160–186 (HDPG…GGMR). A compositionally biased stretch (polar residues) spans 132 to 141 (STKTEPSSDA). Positions 164 to 175 (DSQDDDDEDDES) are enriched in acidic residues. 3 positions are modified to phosphoserine: Ser165, Ser175, and Ser176. 4 C2H2-type zinc fingers span residues 217-236 (CLYC…IQQH), 319-343 (CRIC…TKGH), 425-446 (CTLC…TRAH), and 487-512 (CSVC…SEKH). Basic and acidic residues predominate over residues 343 to 354 (HMEALRNLDSDK). The disordered stretch occupies residues 343–398 (HMEALRNLDSDKRSRKRKRSKSNSVTNSGGDEAEREKESEPEVGPEDAQDTPVVMM). The interval 525–564 (VGSADGRGGDNMDEEEAAASDQAQSSQTDDSEDNDDDNWS) is disordered. Residues 543-552 (ASDQAQSSQT) are compositionally biased toward low complexity. The span at 553 to 563 (DDSEDNDDDNW) shows a compositional bias: acidic residues. The C2H2-type 5 zinc finger occupies 605-629 (QICKFCRVRFHNEAAKARHELSARH). The disordered stretch occupies residues 642 to 684 (KLHQGTNTQTKHNAQDDEESQEQDEEYGEEEEDAEEDSQSNFD). The segment covering 657–679 (DDEESQEQDEEYGEEEEDAEEDS) has biased composition (acidic residues). 2 C2H2-type zinc fingers span residues 737–761 (CKLC…TSRH) and 829–852 (CRVC…SRKH). The segment covering 851-860 (KHVENKERQR) has biased composition (basic and acidic residues). Residues 851–915 (KHVENKERQR…PLAKRSRRSM (65 aa)) are disordered. Phosphoserine occurs at positions 871 and 873. The span at 879–897 (DAERQESGMDKESENDMSV) shows a compositional bias: basic and acidic residues. Ser975 is subject to Phosphoserine. The region spanning 987-1026 (RHVMDLFFDSISPTMKSLPPDLAAEGKSKIMQLVCSLELR) is the BESS domain. Residues 1032-1055 (ATTPTPATVSASSKWPSSTTVTPV) show a composition bias toward low complexity. 4 disordered regions span residues 1032–1060 (ATTP…TPPA), 1079–1116 (TTPH…NGSA), 1154–1180 (QSRT…ADLS), and 1205–1236 (NTPQ…NGCQ). Polar residues-rich tracts occupy residues 1079–1091 (TTPH…QNNN) and 1104–1114 (GASSAQVTING). Residues 1206-1224 (TPQMQQPQQAQASITSSTP) are compositionally biased toward low complexity.

Interacts with Su(var)39 through the BESS domain.

The protein resides in the nucleus. Functionally, dose-limiting factor in position-effect variegation, the inactivation in some cells of a gene translocated next to heterochromatin. It could play a role in chromosome condensation. The polypeptide is Protein suppressor of variegation 3-7 (Su(var)3-7) (Drosophila melanogaster (Fruit fly)).